Reading from the N-terminus, the 315-residue chain is Methionyl-tRNA formyltransferase (315 aa).

110 to 113 (SLLP) is a (6S)-5,6,7,8-tetrahydrofolate binding site.

The protein belongs to the Fmt family.

The catalysed reaction is L-methionyl-tRNA(fMet) + (6R)-10-formyltetrahydrofolate = N-formyl-L-methionyl-tRNA(fMet) + (6S)-5,6,7,8-tetrahydrofolate + H(+). Its function is as follows. Attaches a formyl group to the free amino group of methionyl-tRNA(fMet). The formyl group appears to play a dual role in the initiator identity of N-formylmethionyl-tRNA by promoting its recognition by IF2 and preventing the misappropriation of this tRNA by the elongation apparatus. This Cutibacterium acnes (strain DSM 16379 / KPA171202) (Propionibacterium acnes) protein is Methionyl-tRNA formyltransferase.